Reading from the N-terminus, the 414-residue chain is uncharacterized protein (414 aa).

The Nop domain maps to 246–360; it reads EAPNITKLAG…LNKRVEEIRR (115 aa). The segment at 358–414 is disordered; it reads IRRKYPKPPKKKKKEKPKAKKKEKKGKKEKSKKKKDKKKDKKGKKERKVIGKTKSRK. Residues 361–414 are compositionally biased toward basic residues; sequence KYPKPPKKKKKEKPKAKKKEKKGKKEKSKKKKDKKKDKKGKKERKVIGKTKSRK.

It belongs to the NOP5/NOP56 family.

This is an uncharacterized protein from Methanocaldococcus jannaschii (strain ATCC 43067 / DSM 2661 / JAL-1 / JCM 10045 / NBRC 100440) (Methanococcus jannaschii).